A 160-amino-acid chain; its full sequence is SsrA-binding protein (160 aa).

The protein belongs to the SmpB family.

Its subcellular location is the cytoplasm. Its function is as follows. Required for rescue of stalled ribosomes mediated by trans-translation. Binds to transfer-messenger RNA (tmRNA), required for stable association of tmRNA with ribosomes. tmRNA and SmpB together mimic tRNA shape, replacing the anticodon stem-loop with SmpB. tmRNA is encoded by the ssrA gene; the 2 termini fold to resemble tRNA(Ala) and it encodes a 'tag peptide', a short internal open reading frame. During trans-translation Ala-aminoacylated tmRNA acts like a tRNA, entering the A-site of stalled ribosomes, displacing the stalled mRNA. The ribosome then switches to translate the ORF on the tmRNA; the nascent peptide is terminated with the 'tag peptide' encoded by the tmRNA and targeted for degradation. The ribosome is freed to recommence translation, which seems to be the essential function of trans-translation. In Klebsiella pneumoniae (strain 342), this protein is SsrA-binding protein.